The following is a 321-amino-acid chain: Nucleus-vacuole junction protein 1 (321 aa).

A signal peptide spans 1–22; the sequence is MTRPPLVRGIFSLGLSVAVLKG. Residues 73–125 are TSC13-binding; that stretch reads ELSWRKVFNFISRQSSELDTRIYVLILLLSFLLPIAWTVLDGDRETTLEDKDN. Residues 94–114 form a helical membrane-spanning segment; it reads IYVLILLLSFLLPIAWTVLDG. Positions 139–195 are OSH1-binding; that stretch reads KHYNDGERAVLQFGKNRSEPIILSYKDMNVLEGEHEFTSKEEHSNSHLTSKSENALN. 2 positions are modified to phosphoserine: Ser-156 and Ser-199. The tract at residues 211-275 is disordered; it reads LEEDKNEPNG…SLKSSTSFPI (65 aa). Residues 233-321 form a VAC8-binding region; the sequence is DCSSSSEVES…EQAYSQPFRY (89 aa). Residues 242–262 are compositionally biased toward basic and acidic residues; it reads SQSKCRKESTAEPDSLSRDTR. The span at 263 to 272 shows a compositional bias: low complexity; it reads TTSSLKSSTS. Residues Ser-285 and Ser-298 each carry the phosphoserine modification. A disordered region spans residues 299 to 321; the sequence is PTKSSNLDAQVNTEQAYSQPFRY.

As to quaternary structure, interacts with OSH1, TSC13 and VAC8.

It is found in the nucleus outer membrane. Functionally, involved in the formation of nucleus-vacuole junctions (NVJs) during piecemeal microautophagy of the nucleus (PMN). NVJs are interorganelle interfaces mediated by NVJ1 in the nuclear envelope and VAC8 on the vacuole membrane. Together, NVJ1 and VAC8 form Velcro-like patches through which teardrop-like portions of the nucleus are pinched off into the vacuolar lumen and degraded by the PMN process. Also acts as an outer-nuclear membrane receptor for OSH1 and TSC13. The chain is Nucleus-vacuole junction protein 1 (NVJ1) from Saccharomyces cerevisiae (strain ATCC 204508 / S288c) (Baker's yeast).